Consider the following 165-residue polypeptide: MSHPALTQLRALRYFKEIPALDPQLLDWLLLEDSMTKRFEQQGKTVSVTMIREGFVEQNEIPEELPLLPKESRYWLREILLCADGEPWLAGRTVVPVSTLSGPELALQKLGKTPLGRYLFTSSTLTRDFIEIGRDAGLWGRRSRLRLSGKPLLLTELFLPASPLY.

Residues M35, R77, L115, and E156 each contribute to the substrate site.

Belongs to the UbiC family. As to quaternary structure, monomer.

It localises to the cytoplasm. It catalyses the reaction chorismate = 4-hydroxybenzoate + pyruvate. The protein operates within cofactor biosynthesis; ubiquinone biosynthesis. Removes the pyruvyl group from chorismate, with concomitant aromatization of the ring, to provide 4-hydroxybenzoate (4HB) for the ubiquinone pathway. This is Chorismate pyruvate-lyase from Shigella boydii serotype 18 (strain CDC 3083-94 / BS512).